Here is a 357-residue protein sequence, read N- to C-terminus: GDSL esterase/lipase At5g45950 (357 aa).

Residues M1–S23 form the signal peptide. N37 carries N-linked (GlcNAc...) asparagine glycosylation. The Nucleophile role is filled by S47. N-linked (GlcNAc...) asparagine glycosylation occurs at N132. Active-site residues include D331 and H334.

The protein belongs to the 'GDSL' lipolytic enzyme family.

It localises to the secreted. The protein is GDSL esterase/lipase At5g45950 of Arabidopsis thaliana (Mouse-ear cress).